The primary structure comprises 383 residues: 3-dehydroquinate synthase (383 aa).

NAD(+) contacts are provided by residues 81-86 (EGEVSK), 115-119 (GVVGD), 139-140 (TS), K152, and K161. The Zn(2+) site is built by E194, H256, and H274.

It belongs to the sugar phosphate cyclases superfamily. Dehydroquinate synthase family. The cofactor is Co(2+). Zn(2+) serves as cofactor. It depends on NAD(+) as a cofactor.

Its subcellular location is the cytoplasm. The catalysed reaction is 7-phospho-2-dehydro-3-deoxy-D-arabino-heptonate = 3-dehydroquinate + phosphate. Its pathway is metabolic intermediate biosynthesis; chorismate biosynthesis; chorismate from D-erythrose 4-phosphate and phosphoenolpyruvate: step 2/7. In terms of biological role, catalyzes the conversion of 3-deoxy-D-arabino-heptulosonate 7-phosphate (DAHP) to dehydroquinate (DHQ). The protein is 3-dehydroquinate synthase of Nitrobacter hamburgensis (strain DSM 10229 / NCIMB 13809 / X14).